A 336-amino-acid chain; its full sequence is Phosphate acyltransferase (336 aa).

The protein belongs to the PlsX family. In terms of assembly, homodimer. Probably interacts with PlsY.

The protein resides in the cytoplasm. The enzyme catalyses a fatty acyl-[ACP] + phosphate = an acyl phosphate + holo-[ACP]. The protein operates within lipid metabolism; phospholipid metabolism. Functionally, catalyzes the reversible formation of acyl-phosphate (acyl-PO(4)) from acyl-[acyl-carrier-protein] (acyl-ACP). This enzyme utilizes acyl-ACP as fatty acyl donor, but not acyl-CoA. This Dictyoglomus turgidum (strain DSM 6724 / Z-1310) protein is Phosphate acyltransferase.